The primary structure comprises 288 residues: PAK4-inhibitor inka2 (288 aa).

Positions 159–196 (DPTDWTTSLLTRGRNRQPLVLGDNSFADLIKNWMDLPE) are inka box.

It belongs to the INKA family.

The protein localises to the nucleus. Its function is as follows. Inhibitor of the serine/threonine-protein kinase pak4/pak5. Acts by binding pak4/pak5 in a substrate-like manner, inhibiting the protein kinase activity. This Danio rerio (Zebrafish) protein is PAK4-inhibitor inka2.